The primary structure comprises 323 residues: Aspartate carbamoyltransferase catalytic subunit (323 aa).

Arginine 55 and threonine 56 together coordinate carbamoyl phosphate. Lysine 83 serves as a coordination point for L-aspartate. Positions 105, 138, and 141 each coordinate carbamoyl phosphate. The L-aspartate site is built by arginine 181 and arginine 235. Glycine 276 and proline 277 together coordinate carbamoyl phosphate.

It belongs to the aspartate/ornithine carbamoyltransferase superfamily. ATCase family. As to quaternary structure, heterododecamer (2C3:3R2) of six catalytic PyrB chains organized as two trimers (C3), and six regulatory PyrI chains organized as three dimers (R2).

The catalysed reaction is carbamoyl phosphate + L-aspartate = N-carbamoyl-L-aspartate + phosphate + H(+). It functions in the pathway pyrimidine metabolism; UMP biosynthesis via de novo pathway; (S)-dihydroorotate from bicarbonate: step 2/3. Catalyzes the condensation of carbamoyl phosphate and aspartate to form carbamoyl aspartate and inorganic phosphate, the committed step in the de novo pyrimidine nucleotide biosynthesis pathway. This Corynebacterium aurimucosum (strain ATCC 700975 / DSM 44827 / CIP 107346 / CN-1) (Corynebacterium nigricans) protein is Aspartate carbamoyltransferase catalytic subunit.